The chain runs to 381 residues: Probable tRNA sulfurtransferase (381 aa).

Positions 57 to 160 (EKGIEKLKSV…NKAYVYSKKI (104 aa)) constitute a THUMP domain. ATP is bound by residues 177 to 178 (ML), 202 to 203 (YF), Arg259, Gly281, and Gln290.

Belongs to the ThiI family.

It is found in the cytoplasm. The catalysed reaction is [ThiI sulfur-carrier protein]-S-sulfanyl-L-cysteine + a uridine in tRNA + 2 reduced [2Fe-2S]-[ferredoxin] + ATP + H(+) = [ThiI sulfur-carrier protein]-L-cysteine + a 4-thiouridine in tRNA + 2 oxidized [2Fe-2S]-[ferredoxin] + AMP + diphosphate. It catalyses the reaction [ThiS sulfur-carrier protein]-C-terminal Gly-Gly-AMP + S-sulfanyl-L-cysteinyl-[cysteine desulfurase] + AH2 = [ThiS sulfur-carrier protein]-C-terminal-Gly-aminoethanethioate + L-cysteinyl-[cysteine desulfurase] + A + AMP + 2 H(+). It functions in the pathway cofactor biosynthesis; thiamine diphosphate biosynthesis. Functionally, catalyzes the ATP-dependent transfer of a sulfur to tRNA to produce 4-thiouridine in position 8 of tRNAs, which functions as a near-UV photosensor. Also catalyzes the transfer of sulfur to the sulfur carrier protein ThiS, forming ThiS-thiocarboxylate. This is a step in the synthesis of thiazole, in the thiamine biosynthesis pathway. The sulfur is donated as persulfide by IscS. The sequence is that of Probable tRNA sulfurtransferase from Clostridium kluyveri (strain NBRC 12016).